A 577-amino-acid polypeptide reads, in one-letter code: Origin recognition complex subunit 2 (577 aa).

The stretch at 1–100 (MSKPELKEDK…GNKVYSFQNR (100 aa)) is one Involved in LRWD1-binding repeat. The tract at residues 81-199 (SLKNGSATGG…DDEGVAQEHE (119 aa)) is disordered. The residue at position 116 (T116) is a Phosphothreonine. 2 positions are modified to phosphoserine: S122 and S138. Positions 143–157 (SASDKVQPKNNDKSE) are enriched in basic and acidic residues. Over residues 188–199 (SEDDEGVAQEHE) the composition is skewed to acidic residues. T226 is subject to Phosphothreonine. A phosphoserine mark is found at S248 and S280.

Belongs to the ORC2 family. As to quaternary structure, component of ORC, a complex composed of at least 6 subunits: ORC1, ORC2, ORC3, ORC4, ORC5 and ORC6. ORC is regulated in a cell-cycle dependent manner. It is sequentially assembled at the exit from anaphase of mitosis and disassembled as cells enter S phase. Interacts with DBF4. Interacts with MCM10. Interacts with LRWD1 throughout the cell cycle; this interaction, which occurs only with non-ubiquitinated form of LRWD1, prevents LRWD1 ubiquitination and hence stabilizes the protein. Interacts with POLQ.

Its subcellular location is the nucleus. Functionally, component of the origin recognition complex (ORC) that binds origins of replication. DNA-binding is ATP-dependent. The specific DNA sequences that define origins of replication have not been identified yet. ORC is required to assemble the pre-replication complex necessary to initiate DNA replication. Binds histone H3 and H4 trimethylation marks H3K9me3, H3K20me3 and H4K27me3. Stabilizes LRWD1, by protecting it from ubiquitin-mediated proteasomal degradation. Also stabilizes ORC3. In Homo sapiens (Human), this protein is Origin recognition complex subunit 2 (ORC2).